The following is a 294-amino-acid chain: 4-hydroxy-tetrahydrodipicolinate synthase (294 aa).

Threonine 46 provides a ligand contact to pyruvate. The Proton donor/acceptor role is filled by tyrosine 135. Residue lysine 164 is the Schiff-base intermediate with substrate of the active site. Isoleucine 205 serves as a coordination point for pyruvate.

It belongs to the DapA family. As to quaternary structure, homotetramer; dimer of dimers.

It is found in the cytoplasm. It carries out the reaction L-aspartate 4-semialdehyde + pyruvate = (2S,4S)-4-hydroxy-2,3,4,5-tetrahydrodipicolinate + H2O + H(+). The protein operates within amino-acid biosynthesis; L-lysine biosynthesis via DAP pathway; (S)-tetrahydrodipicolinate from L-aspartate: step 3/4. Its function is as follows. Catalyzes the condensation of (S)-aspartate-beta-semialdehyde [(S)-ASA] and pyruvate to 4-hydroxy-tetrahydrodipicolinate (HTPA). The chain is 4-hydroxy-tetrahydrodipicolinate synthase from Nitratiruptor sp. (strain SB155-2).